The sequence spans 403 residues: D-alanyl-D-alanine carboxypeptidase DacA (403 aa).

The signal sequence occupies residues 1–29 (MNTIFSARIMKRLALTTALCTAFISAAHA). The active-site Acyl-ester intermediate is Ser73. Lys76 acts as the Proton acceptor in catalysis. Residue Ser139 is part of the active site. Lys242 contributes to the substrate binding site.

The protein belongs to the peptidase S11 family.

Its subcellular location is the cell inner membrane. It catalyses the reaction Preferential cleavage: (Ac)2-L-Lys-D-Ala-|-D-Ala. Also transpeptidation of peptidyl-alanyl moieties that are N-acyl substituents of D-alanine.. It functions in the pathway cell wall biogenesis; peptidoglycan biosynthesis. Removes C-terminal D-alanyl residues from sugar-peptide cell wall precursors. The sequence is that of D-alanyl-D-alanine carboxypeptidase DacA (dacA) from Escherichia coli O157:H7.